The primary structure comprises 343 residues: ATP-dependent 6-phosphofructokinase (343 aa).

ATP-binding positions include Gly10 and 103-106 (GEGT). A Mg(2+)-binding site is contributed by Glu104. Substrate contacts are provided by residues 126–128 (TID), Arg163, 170–172 (MGR), Glu223, Arg267, and 273–276 (HVQR). The Proton acceptor role is filled by Asp128.

Belongs to the phosphofructokinase type A (PFKA) family. Mixed-substrate PFK group III subfamily. As to quaternary structure, homodimer or homotetramer. Requires Mg(2+) as cofactor.

The protein localises to the cytoplasm. The enzyme catalyses beta-D-fructose 6-phosphate + ATP = beta-D-fructose 1,6-bisphosphate + ADP + H(+). It functions in the pathway carbohydrate degradation; glycolysis; D-glyceraldehyde 3-phosphate and glycerone phosphate from D-glucose: step 3/4. Its function is as follows. Catalyzes the phosphorylation of D-fructose 6-phosphate to fructose 1,6-bisphosphate by ATP, the first committing step of glycolysis. In Mycobacterium leprae (strain TN), this protein is ATP-dependent 6-phosphofructokinase.